Reading from the N-terminus, the 487-residue chain is GPI mannosyltransferase 1 (487 aa).

A run of 3 helical transmembrane segments spans residues 26-46, 87-107, and 121-141; these read PLPL…YGLW, ILAW…GPWA, and VLFA…LVMG. The segment at 147–175 is disordered; the sequence is SAAKGKEKDTEKTKEGGKKGPSVTASTGM. The span at 150 to 164 shows a compositional bias: basic and acidic residues; the sequence is KGKEKDTEKTKEGGK. 7 helical membrane passes run 205–225, 227–247, 289–309, 359–379, 393–413, 429–449, and 462–482; these read LLGV…ITLA, LLLG…PAIV, LLLA…MYRL, IESL…PLTL, FAFV…YLVL, MGLV…QQAY, and GLWM…GVIV.

Belongs to the PIGM family.

It is found in the endoplasmic reticulum membrane. Its pathway is glycolipid biosynthesis; glycosylphosphatidylinositol-anchor biosynthesis. Mannosyltransferase involved in glycosylphosphatidylinositol-anchor biosynthesis. Transfers the first alpha-1,4-mannose to GlcN-acyl-PI during GPI precursor assembly. Required for cell wall integrity. The protein is GPI mannosyltransferase 1 (gim-1) of Neurospora crassa (strain ATCC 24698 / 74-OR23-1A / CBS 708.71 / DSM 1257 / FGSC 987).